Consider the following 252-residue polypeptide: Fluoroquinolones export permease protein MT2760 (252 aa).

The next 6 membrane-spanning stretches (helical) occupy residues 31–51, 69–89, 119–139, 148–168, 176–196, and 224–244; these read VMLV…TPLF, LILT…LAAF, ATVM…SGIL, IPIG…ILAV, LAMV…PWFI, and TWWP…WVLF.

In terms of assembly, the complex is composed of 2 ATP-binding proteins and 2 transmembrane proteins.

It is found in the cell membrane. Functionally, part of the ABC transporter complex involved in fluoroquinolones export. Probably responsible for the translocation of the substrate across the membrane. The sequence is that of Fluoroquinolones export permease protein MT2760 from Mycobacterium tuberculosis (strain CDC 1551 / Oshkosh).